Reading from the N-terminus, the 464-residue chain is Protein FAM90A9 (464 aa).

Disordered stretches follow at residues 1–42, 70–389, and 411–437; these read MMAR…DPRL, PATL…HDGA, and APSFHSPEKPGTFLAQSPHVSEKSEAP. 2 stretches are compositionally biased toward basic and acidic residues: residues 74-89 and 97-114; these read GKKEGKENLKPWKPRV and NKDKGEKEERPRQQDPQR. The span at 180 to 197 shows a compositional bias: low complexity; sequence LASLSPLRKASLSSSSSL.

It belongs to the FAM90 family.

This is Protein FAM90A9 (FAM90A9) from Homo sapiens (Human).